The primary structure comprises 404 residues: Argininosuccinate synthase (404 aa).

ATP-binding positions include 10-18 (AYSGGLDTS) and A37. Residues Y88 and S93 each coordinate L-citrulline. G118 serves as a coordination point for ATP. Residues T120, N124, and D125 each coordinate L-aspartate. L-citrulline is bound at residue N124. L-citrulline-binding residues include R128, S178, S187, E263, and Y275.

This sequence belongs to the argininosuccinate synthase family. Type 1 subfamily. In terms of assembly, homotetramer.

The protein resides in the cytoplasm. It catalyses the reaction L-citrulline + L-aspartate + ATP = 2-(N(omega)-L-arginino)succinate + AMP + diphosphate + H(+). Its pathway is amino-acid biosynthesis; L-arginine biosynthesis; L-arginine from L-ornithine and carbamoyl phosphate: step 2/3. The chain is Argininosuccinate synthase from Hahella chejuensis (strain KCTC 2396).